A 769-amino-acid chain; its full sequence is MHSNLGLAGLAGLLATASVCLSAPADQNITSDTYCYGQSPPVYPSPEGSGTGSWAAAYAKAKNFVAQLTPEEKVNLTAGTDANNGCSGNIAAIPRLNFPGLCVSDAGNGLRGTDYVSSWPSGLHVGASWSKALAKQRAIHMAKEFRKKGVNVILGPVVGPLGRVAEAGRNWEGFSNDPYLSGALVYETVDGAQSVGVATCTKHYILNEQETNRNPGTEDGVDIAAVSSNIDDKTMHELYLWPFQDAVLAGSASIMCSYNRVNNSYGCQNSKTLNGLLKTELGFQGYVMTDWGAQHAGIAGANAGLDMVMPSTETWGANLTTAISNGTMDASRLDDMAIRIIASWYQMNQNSDSPSPGVGMPTNMYAPHQRVIGREASSKQTLLRGAIEGHVLVKNTNSALPLKSPQLLSVFGYDAKGPDALKQNFNWLSYSPAIQENHTLWVGGGSGANNAAYVDAPIDAIKRQAYEDGTSVLYDLSSEDPDVDPTTDACLVFINSYATEGWDRPGLADKSSDSLVKNVAGKCANTIVTIHNAGIRVIGDWIDHENVTAVIFAHLPGQDSGRALVELLYGRANPSGKLPYTVAKKAEDYGSLLHPSLPETPYGLFPQSDFDEGVYIDYRAFDKANITPQFEFGFGLSYTAFEYSGLRISNPKKSPQYPPSAAIQQGGNPHLWDKTVTVSAEVKNTGRVAGAEVAQLYIGIPNGPVRQLRGFEKVDVSAGETTQVKFALNRRDLSTWDVEAQQWSLQRGTYRVYVGRSSRDLPLTGSFTL.

An N-terminal signal peptide occupies residues 1-22 (MHSNLGLAGLAGLLATASVCLS). N28, N75, and N262 each carry an N-linked (GlcNAc...) asparagine glycan. Residue D290 is part of the active site. 4 N-linked (GlcNAc...) asparagine glycosylation sites follow: N318, N325, N437, and N546.

Belongs to the glycosyl hydrolase 3 family.

The protein localises to the secreted. The enzyme catalyses Hydrolysis of terminal, non-reducing beta-D-glucosyl residues with release of beta-D-glucose.. The protein operates within glycan metabolism; cellulose degradation. Its function is as follows. Beta-glucosidases are one of a number of cellulolytic enzymes involved in the degradation of cellulosic biomass. Catalyzes the last step releasing glucose from the inhibitory cellobiose. The polypeptide is Probable beta-glucosidase M (bglM) (Neosartorya fischeri (strain ATCC 1020 / DSM 3700 / CBS 544.65 / FGSC A1164 / JCM 1740 / NRRL 181 / WB 181) (Aspergillus fischerianus)).